The primary structure comprises 3411 residues: Genome polyprotein (3411 aa).

Residues 1–104 (MSGRKAQGKT…LSSRKRRSHD (104 aa)) lie on the Cytoplasmic side of the membrane. Residues 38–72 (PGPSRGVQGFIFFFLFNILTGKKITAHLKRLWKML) are hydrophobic; homodimerization of capsid protein C. Residues 102–121 (SHDVLTVQFLILGMLLMTGG) constitute a propeptide, ER anchor for the capsid protein C, removed in mature form by serine protease NS3. The helical transmembrane segment at 105–125 (VLTVQFLILGMLLMTGGVTLV) threads the bilayer. At 126-244 (RKNRWLLLNV…GERQLQKIER (119 aa)) the chain is on the extracellular side. 2 N-linked (GlcNAc...) asparagine; by host glycosylation sites follow: Asn134 and Asn150. Residues 245–265 (WLVRNPFFAVTALTIAYLVGS) form a helical membrane-spanning segment. Topologically, residues 266–270 (NMTQR) are cytoplasmic. The helical transmembrane segment at 271 to 285 (VVIALLVLAVGPAYS) threads the bilayer. The Extracellular segment spans residues 286–730 (AHCIGITDRD…TVFGSAFQGL (445 aa)). 8 cysteine pairs are disulfide-bonded: Cys288–Cys315, Cys345–Cys401, Cys345–Cys406, Cys359–Cys390, Cys377–Cys401, Cys377–Cys406, Cys467–Cys568, and Cys585–Cys615. Residues 383–396 (DRGWGNGCGLFGKG) form a fusion peptide region. The chain crosses the membrane as a helical span at residues 731-751 (FGGLNWITKVIMGAVLIWVGI). Residues 752-757 (NTRNMT) lie on the Extracellular side of the membrane. The helical transmembrane segment at 758–778 (MSMSMILVGVIMMFLSLGVGA) threads the bilayer. The Extracellular segment spans residues 779 to 1132 (DQGCAINFGK…LVRSWVTAGE (354 aa)). Disulfide bonds link Cys782–Cys793, Cys833–Cys921, Cys957–Cys1002, Cys1058–Cys1107, Cys1069–Cys1091, and Cys1090–Cys1094. N-linked (GlcNAc...) asparagine; by host glycans are attached at residues Asn908 and Asn986. A helical transmembrane segment spans residues 1133–1153 (IHAVPFGLVSMMIAMEVVLRK). Over 1154–1201 (RQGPKQMLVGGVVLLGAMLVGQVTLLDLLKLTVAVGLHFHEMNNGGDA) the chain is Cytoplasmic. The helical transmembrane segment at 1202–1222 (MYMALIAAFSIRPGLLIGFGL) threads the bilayer. Over 1223-1287 (RTLWSPRERL…ILPLMALLTP (65 aa)) the chain is Lumenal. A helical transmembrane segment spans residues 1288 to 1308 (VTMAEVRLATMLFCTVVIIGV). At 1309–1355 (LHQNSKDTSMQKTIPLVALTLTSYLGLTQPFLGLCAFLATRIFGRRS) the chain is on the cytoplasmic side. The helical transmembrane segment at 1356–1376 (IPVNEALAAAGLVGVLAGLAF) threads the bilayer. The Lumenal portion of the chain corresponds to 1377-1378 (QE). A helical membrane pass occupies residues 1379 to 1399 (MENFLGPIAVGGILMMLVSVA). At 1400–1456 (GRVDGLELKKLGEVSWEEEAEISGSSARYDVALSEQGEFKLLSEEKVPWDQVVMTSL) the chain is on the cytoplasmic side. Residues 1407-1446 (LKKLGEVSWEEEAEISGSSARYDVALSEQGEFKLLSEEKV) are interacts with and activates NS3 protease. The helical intramembrane region spans 1457-1477 (ALVGAAIHPFALLLVLAGWLF). The Cytoplasmic portion of the chain corresponds to 1478 to 2157 (HVRGARRSGD…RNALSMMPEA (680 aa)). The 181-residue stretch at 1485 to 1665 (SGDVLWDIPT…EVKEEGKEEL (181 aa)) folds into the Peptidase S7 domain. Active-site charge relay system; for serine protease NS3 activity residues include His1537, Asp1561, and Ser1622. The 157-residue stretch at 1669–1825 (PTMLKKGMTT…HSNGEIEDVQ (157 aa)) folds into the Helicase ATP-binding domain. An important for RNA-binding region spans residues 1673–1676 (KKGM). 1682–1689 (FHPGAGKT) provides a ligand contact to ATP. Residues 1773–1776 (DEAH) carry the DEAH box motif. In terms of domain architecture, Helicase C-terminal spans 1820 to 1997 (EIEDVQTDIP…VRGGMVAPLY (178 aa)). Lys1877 carries the post-translational modification N6-acetyllysine; by host. The disordered stretch occupies residues 1942 to 1961 (AAQRRGRIGRNPNRDGDSYY). A helical transmembrane segment spans residues 2158 to 2178 (MTIVMLFILAGLLTSGMVIFF). Residues 2179 to 2186 (MSPKGISR) lie on the Lumenal side of the membrane. An intramembrane region (helical) is located at residues 2187 to 2207 (MSMAMGTMAGCGYLMFLGGVK). Residues 2208–2209 (PT) are Lumenal-facing. Residues 2210–2230 (HISYIMLIFFVLMVVVIPEPG) traverse the membrane as a helical segment. The Cytoplasmic portion of the chain corresponds to 2231–2241 (QQRSIQDNQVA). The helical transmembrane segment at 2242 to 2262 (YLIIGILTLVSVVAANELGML) threads the bilayer. The Lumenal portion of the chain corresponds to 2263–2293 (EKTKEDLFGKKNLIPSSASPWSWPDLDLKPG). Residues 2294-2314 (AAWTVYVGIVTMLSPMLHHWI) constitute an intramembrane region (helical). Residues 2315–2360 (KVEYGNLSLSGIAQSASVLSFMDKGIPFMKMNISVIILLVSGWNSI) are Lumenal-facing. Residues 2361–2380 (TVMPLLCGIGCAMLHWSLIL) traverse the membrane as a helical segment. Over 2381–2421 (PGIKAQQSKLAQRRVFHGVAKNPVVDGNPTVDIEEAPEMPA) the chain is Cytoplasmic. Residues 2422–2442 (LYEKKLALYLLLALSLASVAM) traverse the membrane as a helical segment. Topologically, residues 2443 to 2445 (CRT) are lumenal. A helical membrane pass occupies residues 2446-2466 (PFSLAEGIVLASAALGPLIEG). Over 2467–3411 (NTSLLWNGPM…DADLQPGELI (945 aa)) the chain is Cytoplasmic. In terms of domain architecture, mRNA cap 0-1 NS5-type MT spans 2507 to 2771 (GSANGKTLGE…DVILPIGTRS (265 aa)). Ser2562 is an S-adenosyl-L-methionine binding site. Ser2562 carries the phosphoserine modification. Lys2567 (for 2'-O-MTase activity) is an active-site residue. Residues Gly2592, Trp2593, Thr2610, Leu2611, Asp2637, and Ile2638 each coordinate S-adenosyl-L-methionine. The active-site For 2'-O-MTase activity is Asp2652. Ile2653 contributes to the S-adenosyl-L-methionine binding site. Residues Lys2688 and Glu2724 each act as for 2'-O-MTase activity in the active site. Tyr2726 is an S-adenosyl-L-methionine binding site. Residues 2878-2911 (RKIMKVVNRWLFRHLAREKNPRLCTKEEFIAKVR) carry the Nuclear localization signal motif. Residues Glu2945, His2949, Cys2954, and Cys2957 each coordinate Zn(2+). The region spanning 3035 to 3187 (GGFYADDTAG…RPIDDRFGLA (153 aa)) is the RdRp catalytic domain. Zn(2+) is bound by residues His3222, Cys3238, and Cys3357.

In the N-terminal section; belongs to the class I-like SAM-binding methyltransferase superfamily. mRNA cap 0-1 NS5-type methyltransferase family. In terms of assembly, homodimer. Interacts (via N-terminus) with host EXOC1 (via C-terminus); this interaction results in EXOC1 degradation through the proteasome degradation pathway. As to quaternary structure, forms heterodimers with envelope protein E in the endoplasmic reticulum and Golgi. Homodimer; in the endoplasmic reticulum and Golgi. Interacts with protein prM. Interacts with non-structural protein 1. In terms of assembly, homodimer; Homohexamer when secreted. Interacts with envelope protein E. NS1 interacts with NS4B. Interacts with host complement protein CFH; this interaction leads to the degradation of C3. As to quaternary structure, interacts (via N-terminus) with serine protease NS3. Forms a heterodimer with serine protease NS3. May form homooligomers. In terms of assembly, forms a heterodimer with NS2B. Interacts with non-structural protein 2A (via N-terminus). Interacts with NS4B. Interacts with unphosphorylated RNA-directed RNA polymerase NS5; this interaction stimulates RNA-directed RNA polymerase NS5 guanylyltransferase activity. NS3 interacts with host PDCD6IP; this interaction contributes to virion release. As to quaternary structure, interacts with serine protease NS3. Homodimer. Interacts with host STAT2; this interaction prevents the establishment of cellular antiviral state. Interacts with serine protease NS3. Interacts with host TRIM23; this interaction leads to NS5 ubiquitination. Specific enzymatic cleavages in vivo yield mature proteins. The nascent capsid protein C contains a C-terminal hydrophobic domain that act as a signal sequence for translocation of prM into the lumen of the ER. Mature capsid protein C is cleaved at a site upstream of this hydrophobic domain by NS3. prM is cleaved in post-Golgi vesicles by a host furin, releasing the mature small envelope protein M, and peptide pr. Non-structural protein 2A-alpha, a C-terminally truncated form of non-structural protein 2A, results from partial cleavage by NS3. Specific enzymatic cleavages in vivo yield mature proteins peptide 2K acts as a signal sequence and is removed from the N-terminus of NS4B by the host signal peptidase in the ER lumen. Signal cleavage at the 2K-4B site requires a prior NS3 protease-mediated cleavage at the 4A-2K site. In terms of processing, cleaved in post-Golgi vesicles by a host furin, releasing the mature small envelope protein M, and peptide pr. This cleavage is incomplete as up to 30% of viral particles still carry uncleaved prM. Post-translationally, N-glycosylated. N-glycosylated. The excreted form is glycosylated and this is required for efficient secretion of the protein from infected cells. In terms of processing, polyubiquitinated; ubiquitination is probably mediated by host TRIM23 and is prerequisite for NS5-STAT2 interaction. NS5 is not ISGylated or sumoylated. Post-translationally, acetylated by host KAT5. Acetylation modulates NS3 RNA-binding and unwinding activities and plays an important positive role for viral replication. Phosphorylated on serines residues. This phosphorylation may trigger NS5 nuclear localization.

It localises to the virion. The protein resides in the host nucleus. It is found in the host cytoplasm. The protein localises to the host perinuclear region. Its subcellular location is the secreted. It localises to the virion membrane. The protein resides in the host endoplasmic reticulum membrane. The enzyme catalyses Selective hydrolysis of -Xaa-Xaa-|-Yaa- bonds in which each of the Xaa can be either Arg or Lys and Yaa can be either Ser or Ala.. It carries out the reaction RNA(n) + a ribonucleoside 5'-triphosphate = RNA(n+1) + diphosphate. The catalysed reaction is a ribonucleoside 5'-triphosphate + H2O = a ribonucleoside 5'-diphosphate + phosphate + H(+). It catalyses the reaction ATP + H2O = ADP + phosphate + H(+). The enzyme catalyses a 5'-end (5'-triphosphoguanosine)-ribonucleoside in mRNA + S-adenosyl-L-methionine = a 5'-end (N(7)-methyl 5'-triphosphoguanosine)-ribonucleoside in mRNA + S-adenosyl-L-homocysteine. It carries out the reaction a 5'-end (N(7)-methyl 5'-triphosphoguanosine)-ribonucleoside in mRNA + S-adenosyl-L-methionine = a 5'-end (N(7)-methyl 5'-triphosphoguanosine)-(2'-O-methyl-ribonucleoside) in mRNA + S-adenosyl-L-homocysteine + H(+). In terms of biological role, plays a role in virus budding by binding to the cell membrane and gathering the viral RNA into a nucleocapsid that forms the core of a mature virus particle. During virus entry, may induce genome penetration into the host cytoplasm after hemifusion induced by the surface proteins. Can migrate to the cell nucleus where it modulates host functions. Its function is as follows. Inhibits RNA silencing by interfering with host Dicer. Functionally, prevents premature fusion activity of envelope proteins in trans-Golgi by binding to envelope protein E at pH6.0. After virion release in extracellular space, gets dissociated from E dimers. Acts as a chaperone for envelope protein E during intracellular virion assembly by masking and inactivating envelope protein E fusion peptide. prM is the only viral peptide matured by host furin in the trans-Golgi network probably to avoid catastrophic activation of the viral fusion activity in acidic Golgi compartment prior to virion release. prM-E cleavage is inefficient, and many virions are only partially matured. These uncleaved prM would play a role in immune evasion. In terms of biological role, may play a role in virus budding. Exerts cytotoxic effects by activating a mitochondrial apoptotic pathway through M ectodomain. May display a viroporin activity. Its function is as follows. Binds to host cell surface receptor and mediates fusion between viral and cellular membranes. Envelope protein is synthesized in the endoplasmic reticulum in the form of heterodimer with protein prM. They play a role in virion budding in the ER, and the newly formed immature particle is covered with 60 spikes composed of heterodimer between precursor prM and envelope protein E. The virion is transported to the Golgi apparatus where the low pH causes dissociation of PrM-E heterodimers and formation of E homodimers. prM-E cleavage is inefficient, and many virions are only partially matured. These uncleaved prM would play a role in immune evasion. Functionally, involved in immune evasion, pathogenesis and viral replication. Once cleaved off the polyprotein, is targeted to three destinations: the viral replication cycle, the plasma membrane and the extracellular compartment. Essential for viral replication. Required for formation of the replication complex and recruitment of other non-structural proteins to the ER-derived membrane structures. Excreted as a hexameric lipoparticle that plays a role against host immune response. Antagonizing the complement function. Binds to the host macrophages and dendritic cells. Inhibits signal transduction originating from Toll-like receptor 3 (TLR3). Component of the viral RNA replication complex that functions in virion assembly and antagonizes the host immune response. In terms of biological role, required cofactor for the serine protease function of NS3. May have membrane-destabilizing activity and form viroporins. Its function is as follows. Displays three enzymatic activities: serine protease, NTPase and RNA helicase. NS3 serine protease, in association with NS2B, performs its autocleavage and cleaves the polyprotein at dibasic sites in the cytoplasm: C-prM, NS2A-NS2B, NS2B-NS3, NS3-NS4A, NS4A-2K and NS4B-NS5. NS3 RNA helicase binds RNA and unwinds dsRNA in the 3' to 5' direction. Also plays a role in virus assembly. Functionally, regulates the ATPase activity of the NS3 helicase activity. NS4A allows NS3 helicase to conserve energy during unwinding. Functions as a signal peptide for NS4B and is required for the interferon antagonism activity of the latter. In terms of biological role, induces the formation of ER-derived membrane vesicles where the viral replication takes place. Inhibits interferon (IFN)-induced host STAT1 phosphorylation and nuclear translocation, thereby preventing the establishment of cellular antiviral state by blocking the IFN-alpha/beta pathway. Its function is as follows. Replicates the viral (+) and (-) RNA genome, and performs the capping of genomes in the cytoplasm. NS5 methylates viral RNA cap at guanine N-7 and ribose 2'-O positions. Besides its role in RNA genome replication, also prevents the establishment of cellular antiviral state by blocking the interferon-alpha/beta (IFN-alpha/beta) signaling pathway. IFN-I induces binding of NS5 to host IFN-activated transcription factor STAT2, preventing its transcriptional activity. Host TRIM23 is the E3 ligase that interacts with and polyubiquitinates NS5 to promote its binding to STAT2 and trigger IFN-I signaling inhibition. In Yellow fever virus (strain Ghana/Asibi/1927) (YFV), this protein is Genome polyprotein.